The chain runs to 438 residues: Methyl-coenzyme M reductase subunit beta (438 aa).

Residue Tyr367 participates in coenzyme M binding. A coenzyme B-binding site is contributed by Gly369.

Belongs to the methyl-coenzyme M reductase beta subunit family. MCR is a hexamer of two alpha, two beta, and two gamma chains, forming a dimer of heterotrimers. Requires coenzyme F430 as cofactor.

It localises to the cytoplasm. The catalysed reaction is coenzyme B + methyl-coenzyme M = methane + coenzyme M-coenzyme B heterodisulfide. It functions in the pathway one-carbon metabolism; methyl-coenzyme M reduction; methane from methyl-coenzyme M: step 1/1. In terms of biological role, component of the methyl-coenzyme M reductase (MCR) I that catalyzes the reductive cleavage of methyl-coenzyme M (CoM-S-CH3 or 2-(methylthio)ethanesulfonate) using coenzyme B (CoB or 7-mercaptoheptanoylthreonine phosphate) as reductant which results in the production of methane and the mixed heterodisulfide of CoB and CoM (CoM-S-S-CoB). This is the final step in methanogenesis. This is Methyl-coenzyme M reductase subunit beta (mcrB) from Methanothermus fervidus.